The sequence spans 719 residues: Nucleolar complex protein 2 homolog (719 aa).

A compositionally biased stretch (basic residues) spans 1–24; sequence MKLLKKSSSLKKGVTKRAKLQKKP. 3 disordered regions span residues 1–67, 86–136, and 643–719; these read MKLL…GMKK, LQQE…TKIK, and ALEN…SDED. Residues 25-42 show a composition bias toward basic and acidic residues; the sequence is PSKDEASSSDEELAKLDG. The segment covering 89–130 has biased composition (acidic residues); sequence EDADLLNMEEDEDDDEEGEDNEDEEDEEEEEESDEDDDEEDD. Residues 643 to 661 are compositionally biased toward basic and acidic residues; sequence ALENSKKDDKKKKKEEEAA.

It belongs to the NOC2 family.

It is found in the nucleus. Its function is as follows. Required for normal somatic gonad development and for regulation of germline development and proliferation. The chain is Nucleolar complex protein 2 homolog (pro-2) from Caenorhabditis briggsae.